Consider the following 408-residue polypeptide: LL-diaminopimelate aminotransferase (408 aa).

Residues Tyr-15 and Gly-42 each contribute to the substrate site. Residues Tyr-72, 108–109 (SK), Tyr-132, Asn-187, Tyr-218, and 246–248 (SFS) contribute to the pyridoxal 5'-phosphate site. Substrate contacts are provided by Lys-109, Tyr-132, and Asn-187. The residue at position 249 (Lys-249) is an N6-(pyridoxal phosphate)lysine. The pyridoxal 5'-phosphate site is built by Arg-257 and Asn-292. Residues Asn-292 and Arg-388 each contribute to the substrate site.

Belongs to the class-I pyridoxal-phosphate-dependent aminotransferase family. LL-diaminopimelate aminotransferase subfamily. In terms of assembly, homodimer. It depends on pyridoxal 5'-phosphate as a cofactor.

It carries out the reaction (2S,6S)-2,6-diaminopimelate + 2-oxoglutarate = (S)-2,3,4,5-tetrahydrodipicolinate + L-glutamate + H2O + H(+). Its pathway is amino-acid biosynthesis; L-lysine biosynthesis via DAP pathway; LL-2,6-diaminopimelate from (S)-tetrahydrodipicolinate (aminotransferase route): step 1/1. Functionally, involved in the synthesis of meso-diaminopimelate (m-DAP or DL-DAP), required for both lysine and peptidoglycan biosynthesis. Catalyzes the direct conversion of tetrahydrodipicolinate to LL-diaminopimelate. This chain is LL-diaminopimelate aminotransferase, found in Prochlorococcus marinus (strain MIT 9312).